Reading from the N-terminus, the 146-residue chain is Putative pre-16S rRNA nuclease (146 aa).

Belongs to the YqgF nuclease family.

The protein localises to the cytoplasm. Could be a nuclease involved in processing of the 5'-end of pre-16S rRNA. The polypeptide is Putative pre-16S rRNA nuclease (Pediococcus pentosaceus (strain ATCC 25745 / CCUG 21536 / LMG 10740 / 183-1w)).